A 181-amino-acid chain; its full sequence is Alkyl hydroperoxide reductase AhpD (181 aa).

The Proton donor role is filled by Cys131. Cys131 and Cys134 are disulfide-bonded. Residue Cys134 is the Cysteine sulfenic acid (-SOH) intermediate of the active site.

This sequence belongs to the AhpD family.

The enzyme catalyses N(6)-[(R)-dihydrolipoyl]-L-lysyl-[lipoyl-carrier protein] + a hydroperoxide = N(6)-[(R)-lipoyl]-L-lysyl-[lipoyl-carrier protein] + an alcohol + H2O. Its function is as follows. Antioxidant protein with alkyl hydroperoxidase activity. Required for the reduction of the AhpC active site cysteine residues and for the regeneration of the AhpC enzyme activity. This chain is Alkyl hydroperoxide reductase AhpD, found in Rhodopseudomonas palustris (strain BisB18).